The following is a 34-amino-acid chain: Cytochrome b6-f complex subunit 8 (34 aa).

A helical transmembrane segment spans residues 3-23 (IFQIGWAALAAIFTFSIAMVV).

Belongs to the PetN family. The 4 large subunits of the cytochrome b6-f complex are cytochrome b6, subunit IV (17 kDa polypeptide, PetD), cytochrome f and the Rieske protein, while the 4 small subunits are PetG, PetL, PetM and PetN. The complex functions as a dimer.

It localises to the cellular thylakoid membrane. Functionally, component of the cytochrome b6-f complex, which mediates electron transfer between photosystem II (PSII) and photosystem I (PSI), cyclic electron flow around PSI, and state transitions. The protein is Cytochrome b6-f complex subunit 8 of Prochlorococcus marinus subsp. pastoris (strain CCMP1986 / NIES-2087 / MED4).